Reading from the N-terminus, the 180-residue chain is Type-1 fimbrial protein subunit (180 aa).

An N-terminal signal peptide occupies residues 1–22 (MKKVLLPLAALVLSATASNAMA). An intrachain disulfide couples cysteine 38 to cysteine 78.

Belongs to the fimbrial protein family.

It localises to the fimbrium. Functionally, fimbriae (also called pili), polar filaments radiating from the surface of the bacterium to a length of 0.5-1.5 micrometers and numbering 100-300 per cell, enable bacteria to colonize the epithelium of specific host organs. This is Type-1 fimbrial protein subunit (fimA) from Serratia marcescens.